Here is a 339-residue protein sequence, read N- to C-terminus: Probable thylakoid lumen protein sll0997 (339 aa).

Residues methionine 1–alanine 26 form the signal peptide.

The protein localises to the cellular thylakoid lumen. The polypeptide is Probable thylakoid lumen protein sll0997 (Synechocystis sp. (strain ATCC 27184 / PCC 6803 / Kazusa)).